A 335-amino-acid polypeptide reads, in one-letter code: Ethanol acetyltransferase 1 (335 aa).

The 253-residue stretch at 48–300 folds into the AB hydrolase-1 domain; the sequence is PIVFVHGIFG…NSAHDILDQR (253 aa). Residues Ser-121, Asp-145, and His-294 each act as charge relay system in the active site.

This sequence belongs to the AB hydrolase superfamily.

The protein resides in the mitochondrion. The catalysed reaction is ethanol + acetyl-CoA = ethyl acetate + CoA. The enzyme catalyses acetyl-CoA + H2O = acetate + CoA + H(+). It carries out the reaction ethyl acetate + H2O = ethanol + acetate + H(+). Its function is as follows. Alcohol acetyltransferase that catalyzes the synthesis of ethyl acetate from ethanol and acetyl-CoA. Can also function as a thioesterase by hydrolyzing acetyl-CoA in the absence of ethanol, as well as esterase hydrolyzing ethyl acetate. The protein is Ethanol acetyltransferase 1 (EAT1) of Cyberlindnera fabianii (Yeast).